Reading from the N-terminus, the 101-residue chain is Urease subunit beta (101 aa).

This sequence belongs to the urease beta subunit family. As to quaternary structure, heterotrimer of UreA (gamma), UreB (beta) and UreC (alpha) subunits. Three heterotrimers associate to form the active enzyme.

The protein resides in the cytoplasm. It catalyses the reaction urea + 2 H2O + H(+) = hydrogencarbonate + 2 NH4(+). Its pathway is nitrogen metabolism; urea degradation; CO(2) and NH(3) from urea (urease route): step 1/1. The polypeptide is Urease subunit beta (Ralstonia nicotianae (strain ATCC BAA-1114 / GMI1000) (Ralstonia solanacearum)).